A 264-amino-acid polypeptide reads, in one-letter code: Mitochondrial distribution and morphology protein 12 (264 aa).

The region spanning 1 to 232 (MSFDINWNKI…WPSWINLDFN (232 aa)) is the SMP-LTD domain. Residues 240–264 (ESSSSAEESLPHRDDAQDFSADARA) are disordered. Positions 248–264 (SLPHRDDAQDFSADARA) are enriched in basic and acidic residues.

Belongs to the MDM12 family. In terms of assembly, component of the ER-mitochondria encounter structure (ERMES) or MDM complex, composed of MMM1, MDM10, MDM12 and MDM34. An MMM1 homodimer associates with one molecule of MDM12 on each side in a pairwise head-to-tail manner, and the SMP-LTD domains of MMM1 and MDM12 generate a continuous hydrophobic tunnel for phospholipid trafficking.

It localises to the mitochondrion outer membrane. The protein resides in the endoplasmic reticulum membrane. Component of the ERMES/MDM complex, which serves as a molecular tether to connect the endoplasmic reticulum (ER) and mitochondria. Components of this complex are involved in the control of mitochondrial shape and protein biogenesis, and function in nonvesicular lipid trafficking between the ER and mitochondria. MDM12 is required for the interaction of the ER-resident membrane protein MMM1 and the outer mitochondrial membrane-resident beta-barrel protein MDM10. The MDM12-MMM1 subcomplex functions in the major beta-barrel assembly pathway that is responsible for biogenesis of all mitochondrial outer membrane beta-barrel proteins, and acts in a late step after the SAM complex. The MDM10-MDM12-MMM1 subcomplex further acts in the TOM40-specific pathway after the action of the MDM12-MMM1 complex. Essential for establishing and maintaining the structure of mitochondria and maintenance of mtDNA nucleoids. This chain is Mitochondrial distribution and morphology protein 12, found in Eremothecium gossypii (strain ATCC 10895 / CBS 109.51 / FGSC 9923 / NRRL Y-1056) (Yeast).